The following is a 991-amino-acid chain: MAVTTVAQFATELNRPASTLLEQLQHAGVSKASASDPLTDTDKEKLLAYLRTSHGTSGADRKKITLTKKSTSEIKQADASGKARTIQVEVRKKRVFVKRDDPTGASSESHDSQDVQELSAAEEAELQRREEEALREAEALRRQQEEEAAQRQRAAEEQARQEREARERAEREAAERAAAEAAARVAAEAAAALAAAEKAAATAPAPAPVAAVVPKAPAPAPVVAAPTLAVASLGAKPVAPAPTSGMRVIKAADIVAGEAQKQIDLDKRRKAAEAEAAAIRAMMAAPKKVMVAKKPEEPKPVVPAAGAVGKDGIKGTIHRPKTAAGAPAPGAAPGAAAKPGEKKSVKSEKLSSSWADDAKKRGAAAPASKGRAPDVRGGWKAPGGARGGRRGDRGGAVSNFTPPADVQIHEVHVPETISVADLAHKMSVKGSEVIKQLMRLGQMVTINQQLDQETAMIVVEEMGHKAFAAKLDDPDAFLEEENLAEAGESLPRPPVVTVMGHVDHGKTSLLDYIRTSRVAAGEAGGITQHIGAYHVETPRGVITFLDTPGHEAFTAMRARGAKATDIVILVVAADDGVMPQTKEAIAHSKAAGVPIVVAINKIDKPDSNLDRVRSELVAEGVVPEEFGGDAPFCLVSAKTGQGIDTLLEQVLLQAEVLELNAPQEALAKGLVIEARLDKGRGPVATVLVQSGTLKRGDVVLAGQSYGRVRAMLDETGKAAQEAGPSIPVEIQGLTEVPSAGDEFMVLADERRAREIATFRQGKYREVNLNRRQAAKLENMFENMGQGAAQTLALIIKADVQGSQEALAASLLKLSTDEVKVQIVHAAVGGISESDVNLALASKAVIIGFNVRADAGARKLADGNDVDLRYYNVIYDAVDEIKSAMSGMLAPEQREEAIGTAEIRTVFVATKIGTIAGSMVTSGLVRRNCRFRLLRNNIVIYTGEVDSVRRLKDDVKEVKEGFECGIKLKNYTDIAEGDQLEFFEIKEVARTL.

Disordered stretches follow at residues 53 to 85 (SHGT…KART), 97 to 175 (VKRD…EAAE), and 312 to 395 (GIKG…DRGG). Composition is skewed to basic and acidic residues over residues 97 to 113 (VKRD…HDSQ) and 125 to 175 (ELQR…EAAE). Positions 323-338 (AAGAPAPGAAPGAAAK) are enriched in low complexity. Residues 339–349 (PGEKKSVKSEK) show a composition bias toward basic and acidic residues. Residues 491–658 (PRPPVVTVMG…QVLLQAEVLE (168 aa)) form the tr-type G domain. Positions 500–507 (GHVDHGKT) are G1. 500–507 (GHVDHGKT) serves as a coordination point for GTP. Residues 525–529 (GITQH) form a G2 region. Positions 546–549 (DTPG) are G3. Residues 546-550 (DTPGH) and 600-603 (NKID) contribute to the GTP site. The tract at residues 600–603 (NKID) is G4. Residues 636–638 (SAK) form a G5 region.

The protein belongs to the TRAFAC class translation factor GTPase superfamily. Classic translation factor GTPase family. IF-2 subfamily.

Its subcellular location is the cytoplasm. One of the essential components for the initiation of protein synthesis. Protects formylmethionyl-tRNA from spontaneous hydrolysis and promotes its binding to the 30S ribosomal subunits. Also involved in the hydrolysis of GTP during the formation of the 70S ribosomal complex. The chain is Translation initiation factor IF-2 from Leptothrix cholodnii (strain ATCC 51168 / LMG 8142 / SP-6) (Leptothrix discophora (strain SP-6)).